A 424-amino-acid polypeptide reads, in one-letter code: Phosphomethylpyrimidine synthase (424 aa).

Substrate contacts are provided by residues Asn66, Met95, Tyr124, His163, 185-187, 226-229, and Glu265; these read SRG and DGMR. His269 serves as a coordination point for Zn(2+). Substrate is bound at residue Phe292. His333 is a Zn(2+) binding site. Residues Cys408, Cys411, and Cys415 each coordinate [4Fe-4S] cluster.

It belongs to the ThiC family. Requires [4Fe-4S] cluster as cofactor.

The catalysed reaction is 5-amino-1-(5-phospho-beta-D-ribosyl)imidazole + S-adenosyl-L-methionine = 4-amino-2-methyl-5-(phosphooxymethyl)pyrimidine + CO + 5'-deoxyadenosine + formate + L-methionine + 3 H(+). It functions in the pathway cofactor biosynthesis; thiamine diphosphate biosynthesis. Its function is as follows. Catalyzes the synthesis of the hydroxymethylpyrimidine phosphate (HMP-P) moiety of thiamine from aminoimidazole ribotide (AIR) in a radical S-adenosyl-L-methionine (SAM)-dependent reaction. The protein is Phosphomethylpyrimidine synthase of Thermotoga neapolitana (strain ATCC 49049 / DSM 4359 / NBRC 107923 / NS-E).